The sequence spans 110 residues: UPF0122 protein gbs1018 (110 aa).

It belongs to the UPF0122 family.

Its function is as follows. Might take part in the signal recognition particle (SRP) pathway. This is inferred from the conservation of its genetic proximity to ftsY/ffh. May be a regulatory protein. The protein is UPF0122 protein gbs1018 of Streptococcus agalactiae serotype III (strain NEM316).